A 553-amino-acid polypeptide reads, in one-letter code: MAKMIVFDETARRALERGVNALADAVRVTLGPKGRNVVLEKKFGAPQIVNDGVTIAKEIELEDPLENTGAQLIREVASKTNDVAGDGTTTATVLAQALIREGLRNVAAGANPMSLKRGMEKTVAKLVQEIAAMAKPVEDNKTIAEVATISSGNDEEIGQMIAEAMDKVGKEGVITVEESKSLVTELDVVEGMQFDKGYVSPYFVTDTERMITDLDEPFILLTDKKISIIQDLIPVLEKVARAGRPLLIISEDLEGEALATLVVNKLRGVLNCVAVKAPGFGDRRKAMLQDIAVLTGGDVISEDIGLKLENVTIDMLGKARKVTITKDKTTIVAGTDNKAAVEKRIAQIHKQMEDTDSDFDREKLQERLAKLAGGVAVIKVGAATETELKDRKLRIEDALNATKAAVEEGIVPGGGTTLLHLTKKIDAIKAGLADDEKTGADLIARALEAPLRQIADNAGVEGSVIAQKVRELDFNIGYDAMKGEFVDMLAAGVADPAKVVRSALQNAASIAAMVLTTEVLIVDKPEKKKAGAGAPDMGGMGGMGGMGGMGGMM.

ATP-binding positions include T29–P32, D86–T90, G414, and D495.

Belongs to the chaperonin (HSP60) family. As to quaternary structure, forms a cylinder of 14 subunits composed of two heptameric rings stacked back-to-back. Interacts with the co-chaperonin GroES.

The protein localises to the cytoplasm. The enzyme catalyses ATP + H2O + a folded polypeptide = ADP + phosphate + an unfolded polypeptide.. Functionally, together with its co-chaperonin GroES, plays an essential role in assisting protein folding. The GroEL-GroES system forms a nano-cage that allows encapsulation of the non-native substrate proteins and provides a physical environment optimized to promote and accelerate protein folding. In Gloeobacter violaceus (strain ATCC 29082 / PCC 7421), this protein is Chaperonin GroEL 2.